Reading from the N-terminus, the 348-residue chain is Anthranilate phosphoribosyltransferase (348 aa).

5-phospho-alpha-D-ribose 1-diphosphate contacts are provided by residues Gly81, 84–85, 91–94, 109–117, and Ser121; these read GD, NVST, and KHGNRAVSG. Position 81 (Gly81) interacts with anthranilate. Ser93 contacts Mg(2+). Asn112 serves as a coordination point for anthranilate. Arg167 contacts anthranilate. Mg(2+)-binding residues include Asp226 and Glu227.

It belongs to the anthranilate phosphoribosyltransferase family. In terms of assembly, homodimer. Mg(2+) serves as cofactor.

The catalysed reaction is N-(5-phospho-beta-D-ribosyl)anthranilate + diphosphate = 5-phospho-alpha-D-ribose 1-diphosphate + anthranilate. It participates in amino-acid biosynthesis; L-tryptophan biosynthesis; L-tryptophan from chorismate: step 2/5. Catalyzes the transfer of the phosphoribosyl group of 5-phosphorylribose-1-pyrophosphate (PRPP) to anthranilate to yield N-(5'-phosphoribosyl)-anthranilate (PRA). In Ectopseudomonas mendocina (strain ymp) (Pseudomonas mendocina), this protein is Anthranilate phosphoribosyltransferase.